The primary structure comprises 434 residues: Glutamyl-tRNA reductase (434 aa).

Substrate is bound by residues 54–57 (TCNR), Ser-113, 118–120 (EAQ), and Gln-124. The active-site Nucleophile is Cys-55. NADP(+) is bound at residue 193-198 (GGGEVS).

Belongs to the glutamyl-tRNA reductase family. Homodimer.

The enzyme catalyses (S)-4-amino-5-oxopentanoate + tRNA(Glu) + NADP(+) = L-glutamyl-tRNA(Glu) + NADPH + H(+). Its pathway is porphyrin-containing compound metabolism; protoporphyrin-IX biosynthesis; 5-aminolevulinate from L-glutamyl-tRNA(Glu): step 1/2. The protein operates within porphyrin-containing compound metabolism; chlorophyll biosynthesis. Catalyzes the NADPH-dependent reduction of glutamyl-tRNA(Glu) to glutamate 1-semialdehyde (GSA). The chain is Glutamyl-tRNA reductase from Chloroflexus aurantiacus (strain ATCC 29366 / DSM 635 / J-10-fl).